We begin with the raw amino-acid sequence, 159 residues long: Ribosomal RNA large subunit methyltransferase H (159 aa).

S-adenosyl-L-methionine is bound by residues Leu76, Gly108, and 127 to 132; that span reads FSKMTF.

Belongs to the RNA methyltransferase RlmH family. In terms of assembly, homodimer.

The protein resides in the cytoplasm. The catalysed reaction is pseudouridine(1915) in 23S rRNA + S-adenosyl-L-methionine = N(3)-methylpseudouridine(1915) in 23S rRNA + S-adenosyl-L-homocysteine + H(+). In terms of biological role, specifically methylates the pseudouridine at position 1915 (m3Psi1915) in 23S rRNA. The protein is Ribosomal RNA large subunit methyltransferase H of Bifidobacterium animalis subsp. lactis (strain AD011).